Consider the following 103-residue polypeptide: Pyrimidine/purine nucleoside phosphorylase (103 aa).

Belongs to the nucleoside phosphorylase PpnP family.

It carries out the reaction a purine D-ribonucleoside + phosphate = a purine nucleobase + alpha-D-ribose 1-phosphate. The catalysed reaction is adenosine + phosphate = alpha-D-ribose 1-phosphate + adenine. It catalyses the reaction cytidine + phosphate = cytosine + alpha-D-ribose 1-phosphate. The enzyme catalyses guanosine + phosphate = alpha-D-ribose 1-phosphate + guanine. It carries out the reaction inosine + phosphate = alpha-D-ribose 1-phosphate + hypoxanthine. The catalysed reaction is thymidine + phosphate = 2-deoxy-alpha-D-ribose 1-phosphate + thymine. It catalyses the reaction uridine + phosphate = alpha-D-ribose 1-phosphate + uracil. The enzyme catalyses xanthosine + phosphate = alpha-D-ribose 1-phosphate + xanthine. Its function is as follows. Catalyzes the phosphorolysis of diverse nucleosides, yielding D-ribose 1-phosphate and the respective free bases. Can use uridine, adenosine, guanosine, cytidine, thymidine, inosine and xanthosine as substrates. Also catalyzes the reverse reactions. The polypeptide is Pyrimidine/purine nucleoside phosphorylase (Dechloromonas aromatica (strain RCB)).